The primary structure comprises 230 residues: Cytochrome b6-f complex iron-sulfur subunit, chloroplastic (230 aa).

The N-terminal 50 residues, 1 to 50 (MSSTTLSPTTPSQLCSGKSGISCPSIALLVKPTRTQMTGRGNKGMKITCQ), are a transit peptide targeting the chloroplast. The chain crosses the membrane as a helical span at residues 72–92 (LLGALSLPTAGMLVPYGSFLV). Positions 115-213 (ATEWLKTHAP…VGVEDGKVVF (99 aa)) constitute a Rieske domain. [2Fe-2S] cluster contacts are provided by C157, H159, C175, and H178. C162 and C177 are joined by a disulfide.

This sequence belongs to the Rieske iron-sulfur protein family. The 4 large subunits of the cytochrome b6-f complex are cytochrome b6, subunit IV (17 kDa polypeptide, petD), cytochrome f and the Rieske protein, while the 4 small subunits are petG, petL, petM and petN. The complex functions as a dimer. It depends on [2Fe-2S] cluster as a cofactor.

The protein localises to the plastid. It localises to the chloroplast thylakoid membrane. It catalyses the reaction 2 oxidized [plastocyanin] + a plastoquinol + 2 H(+)(in) = 2 reduced [plastocyanin] + a plastoquinone + 4 H(+)(out). Its function is as follows. Component of the cytochrome b6-f complex, which mediates electron transfer between photosystem II (PSII) and photosystem I (PSI), cyclic electron flow around PSI, and state transitions. The chain is Cytochrome b6-f complex iron-sulfur subunit, chloroplastic (petC) from Pisum sativum (Garden pea).